Here is a 314-residue protein sequence, read N- to C-terminus: 1-aminocyclopropane-1-carboxylate oxidase 1 (314 aa).

The 101-residue stretch at 153-253 folds into the Fe2OG dioxygenase domain; sequence PNFGTKVSNY…RMSIASFYNP (101 aa). Fe cation is bound by residues H177, D179, and H234.

The protein belongs to the iron/ascorbate-dependent oxidoreductase family. Monomer. The cofactor is Fe cation.

It carries out the reaction 1-aminocyclopropane-1-carboxylate + L-ascorbate + O2 = ethene + L-dehydroascorbate + hydrogen cyanide + CO2 + 2 H2O. Its pathway is alkene biosynthesis; ethylene biosynthesis via S-adenosyl-L-methionine; ethylene from S-adenosyl-L-methionine: step 2/2. The chain is 1-aminocyclopropane-1-carboxylate oxidase 1 from Malus domestica (Apple).